Reading from the N-terminus, the 167-residue chain is HTH-type transcriptional repressor YetL (167 aa).

Positions Ser-26–Glu-160 constitute an HTH marR-type domain. Positions Pro-74–Arg-97 form a DNA-binding region, H-T-H motif.

In terms of assembly, homodimer. The N- and C-terminal helices from both subunits stabilize YetL dimer via extensive intersubunit interactions.

Binding to the yetM cis sequence is clearly inhibited by kaempferol, morin, apigenin and luteolin, slightly inhibited by quercetin and galangin, but no inhibition is observed with the other flavonoids. Flavonoid binding may induce conformational changes and modulate interaction with DNA. Its function is as follows. Negatively regulates yetM expression and its own expression. Binds specifically to corresponding single sites in the divergent yetL and yetM promoter regions, with higher affinity to the yetM region. Recognizes a 28-mer operator of double-stranded DNA that contains a palindromic sequence. This Bacillus subtilis (strain 168) protein is HTH-type transcriptional repressor YetL (yetL).